The chain runs to 256 residues: uncharacterized protein (256 aa).

3 helical membrane passes run Leu42–Phe62, Phe73–Leu93, and Trp108–Val128.

It is found in the cell membrane. This is an uncharacterized protein from Mycoplasma genitalium (strain ATCC 33530 / DSM 19775 / NCTC 10195 / G37) (Mycoplasmoides genitalium).